Reading from the N-terminus, the 155-residue chain is SsrA-binding protein (155 aa).

This sequence belongs to the SmpB family.

Its subcellular location is the cytoplasm. Required for rescue of stalled ribosomes mediated by trans-translation. Binds to transfer-messenger RNA (tmRNA), required for stable association of tmRNA with ribosomes. tmRNA and SmpB together mimic tRNA shape, replacing the anticodon stem-loop with SmpB. tmRNA is encoded by the ssrA gene; the 2 termini fold to resemble tRNA(Ala) and it encodes a 'tag peptide', a short internal open reading frame. During trans-translation Ala-aminoacylated tmRNA acts like a tRNA, entering the A-site of stalled ribosomes, displacing the stalled mRNA. The ribosome then switches to translate the ORF on the tmRNA; the nascent peptide is terminated with the 'tag peptide' encoded by the tmRNA and targeted for degradation. The ribosome is freed to recommence translation, which seems to be the essential function of trans-translation. In Streptococcus uberis (strain ATCC BAA-854 / 0140J), this protein is SsrA-binding protein.